A 114-amino-acid chain; its full sequence is MATRRIISQEKTLLEKDDSIGSSPAADEKSNIAPAVPTSVIMKLLAFTLGMIVIPIGSYFATVDSVFNGNSTYAGALAAIMANVVLIGYIFVAMAEDQSDQQEGGGPGDGKKDR.

Residues 1–39 lie on the Cytoplasmic side of the membrane; the sequence is MATRRIISQEKTLLEKDDSIGSSPAADEKSNIAPAVPTS. Residues 40–60 form a helical membrane-spanning segment; the sequence is VIMKLLAFTLGMIVIPIGSYF. Over 61–73 the chain is Lumenal; the sequence is ATVDSVFNGNSTY. The chain crosses the membrane as a helical span at residues 74–94; sequence AGALAAIMANVVLIGYIFVAM. The Cytoplasmic portion of the chain corresponds to 95-114; it reads AEDQSDQQEGGGPGDGKKDR. Positions 111–114 match the Prevents secretion from ER motif; it reads KKDR.

This sequence belongs to the VMA21 family.

It is found in the endoplasmic reticulum membrane. Its subcellular location is the endoplasmic reticulum-Golgi intermediate compartment membrane. The protein resides in the cytoplasmic vesicle. The protein localises to the COPII-coated vesicle membrane. Its function is as follows. Required for the assembly of the V0 complex of the vacuolar ATPase (V-ATPase) in the endoplasmic reticulum. In Chaetomium globosum (strain ATCC 6205 / CBS 148.51 / DSM 1962 / NBRC 6347 / NRRL 1970) (Soil fungus), this protein is Vacuolar ATPase assembly integral membrane protein VMA21.